Consider the following 430-residue polypeptide: Meiotically up-regulated gene 132 protein (430 aa).

Belongs to the UPF0300 family.

The protein resides in the mitochondrion. Has a role in meiosis. The sequence is that of Meiotically up-regulated gene 132 protein (mug132) from Schizosaccharomyces pombe (strain 972 / ATCC 24843) (Fission yeast).